The primary structure comprises 667 residues: tRNA uridine 5-carboxymethylaminomethyl modification enzyme MnmG (667 aa).

13 to 18 serves as a coordination point for FAD; the sequence is GGGHAG. 280–294 contacts NAD(+); sequence GPRYCPSVEDKINRF.

This sequence belongs to the MnmG family. As to quaternary structure, homodimer. Heterotetramer of two MnmE and two MnmG subunits. It depends on FAD as a cofactor.

It is found in the cytoplasm. Functionally, NAD-binding protein involved in the addition of a carboxymethylaminomethyl (cmnm) group at the wobble position (U34) of certain tRNAs, forming tRNA-cmnm(5)s(2)U34. The chain is tRNA uridine 5-carboxymethylaminomethyl modification enzyme MnmG from Polaromonas naphthalenivorans (strain CJ2).